A 402-amino-acid polypeptide reads, in one-letter code: Beta-peptidyl aminopeptidase BapA (402 aa).

Positions 1-29 (MTSTQRLWSGALPLLTALIVSIAATASLA) are cleaved as a signal peptide. The active-site Nucleophile is S279. Residues S317 and E319 each act as proton donor/acceptor in the active site.

It belongs to the peptidase S58 family. In terms of assembly, heterooctamer of 4 heterodimers ((alpha:beta)4); each heterodimer is composed of an alpha subunit and a beta subunit processed from the same precursor. Post-translationally, autoproteolytic processing to generate the alpha and beta subunit is required for self-activation and is proposed to use a similar mechanism as substrate cleavage.

The protein resides in the periplasm. It catalyses the reaction Cleaves N-terminal beta-homoamino acids from peptides composed of 2 to 6 amino acids.. With respect to regulation, inhibited by AEBSF (4-(2-aminoethyl)benzenesulfonyl fluoride, Pefabloc SC), ampicillin and AMP(hyd) (ampillicin-derived penicilloic acid). In terms of biological role, beta-aminopeptidase that can cleave synthetic beta-peptides which consist of backbone-elongated beta-amino acid residues that are not processed by common proteolytic enzymes. Can cleave the beta-peptides beta-homoVal-beta-homoAla-beta-homoLeu and beta-homoAla-beta-homoLeu. Requires a beta-amino acid at the N-terminus of peptide substrates and cleaves the peptide bond between the N-terminal beta-amino acid and the amino acid at the second position of tripeptidic substrates of the general structure H-betahXaa-Ile-betahTyr-OH according to the following preferences with regard to the side chain of the N-terminal beta-amino acid: aliphatic and aromatic &gt; OH-containing &gt; hydrogen, basic and polar. The chain is Beta-peptidyl aminopeptidase BapA from Sphingosinicella xenopeptidilytica.